Consider the following 156-residue polypeptide: Small ribosomal subunit protein uS7 (156 aa).

Belongs to the universal ribosomal protein uS7 family. In terms of assembly, part of the 30S ribosomal subunit. Contacts proteins S9 and S11.

One of the primary rRNA binding proteins, it binds directly to 16S rRNA where it nucleates assembly of the head domain of the 30S subunit. Is located at the subunit interface close to the decoding center, probably blocks exit of the E-site tRNA. This chain is Small ribosomal subunit protein uS7, found in Mycobacterium sp. (strain JLS).